Reading from the N-terminus, the 305-residue chain is Protein FdhE homolog (305 aa).

Belongs to the FdhE family.

Its subcellular location is the cytoplasm. In terms of biological role, necessary for formate dehydrogenase activity. This is Protein FdhE homolog from Actinobacillus pleuropneumoniae serotype 7 (strain AP76).